A 149-amino-acid polypeptide reads, in one-letter code: Transthyretin (149 aa).

An N-terminal signal peptide occupies residues 1–20 (MAFHSLLLLCLAGLAFVSET). At cysteine 32 the chain carries Sulfocysteine. Lysine 37 contacts L-thyroxine. Glutamate 64 is modified (4-carboxyglutamate). Positions 76 and 139 each coordinate L-thyroxine.

The protein belongs to the transthyretin family. In terms of assembly, homotetramer. Dimer of dimers. In the homotetramer, subunits assemble around a central channel that can accommodate two ligand molecules. Interacts with RBP4. Post-translationally, sulfonation of the reactive cysteine Cys-32 enhances the stability of the native conformation of TTR, avoiding misassembly of the protein leading to amyloid formation.

It localises to the secreted. Thyroid hormone-binding protein. Probably transports thyroxine from the bloodstream to the brain. The polypeptide is Transthyretin (TTR) (Notamacropus eugenii (Tammar wallaby)).